Consider the following 152-residue polypeptide: uncharacterized protein (152 aa).

N-linked (GlcNAc...) asparagine; by host glycosylation occurs at N2. Helical transmembrane passes span 5-25, 36-56, and 68-88; these read MILLMVIASFVAGYLSTMNLW, LNDFYMVLLMVGWMIVMCYIL, and LIITITIIIIIVYAIRTQAFI. N113 carries N-linked (GlcNAc...) asparagine; by host glycosylation.

The protein resides in the membrane. This is an uncharacterized protein from Acanthamoeba polyphaga mimivirus (APMV).